The following is a 552-amino-acid chain: DnaJ homolog subfamily C member 1 (552 aa).

The signal sequence occupies residues 1-43; it reads MWVPGFGSARLPQRRRSGLESSSVRPLWLLLLFLLAAVRPVRA. Topologically, residues 44-149 are lumenal; that stretch reads WESGDLELFD…RRVRKMSNAE (106 aa). Residues 56–129 enclose the J domain; sequence EEVQLNFYEF…RYDDVLINGL (74 aa). Residues 150 to 170 form a helical membrane-spanning segment; it reads LALLLFIILTVGHYAVVWSIY. Residues 171-552 lie on the Cytoplasmic side of the membrane; sequence LEKQLDELLG…LVQKKKQAKS (382 aa). The SANT 1 domain occupies 323 to 377; that stretch reads RQAPEWTEEDLSQLTRSMVKFPGGTPGRWDKIAHELGRSVTDVTTKAKELKDSVT. The tract at residues 370 to 495 is disordered; sequence KELKDSVTSS…ERTRAAEEAW (126 aa). At S379 the chain carries Phosphoserine. Positions 419–431 are enriched in acidic residues; the sequence is MEDEEHEAAEGEQ. Positions 453 to 470 are enriched in basic and acidic residues; that stretch reads TRVEPEEKLRGKRQKDFD. Phosphoserine is present on residues S477 and S478. The span at 480-492 shows a compositional bias: basic and acidic residues; the sequence is EEKQRKERTRAAE. The SANT 2 domain maps to 490 to 545; it reads AAEEAWTQSQQKLLELALQQYPKGASDRWDKIAKCVPSKSKEDCIARYKLLVELVQ.

Interacts (via J domain) with HSPA5. Interacts (via cytosolic domain) with ribosomes. Interacts (via SANT 2 domain) with SERPINA3; the interaction delays the formation of the covalent inhibitory complex SERPINA3-chymotrypsin, but does not alter the catalytic activity of SERPINA3. Interacts (via SANT 2 domain) with ITIH4 (via C-terminus); the interaction protects ITIH4 against in vitro cleavage by kallikrein. As to expression, widely expressed.

The protein localises to the endoplasmic reticulum membrane. It is found in the nucleus membrane. It localises to the microsome membrane. Functionally, may modulate protein synthesis. This chain is DnaJ homolog subfamily C member 1 (Dnajc1), found in Mus musculus (Mouse).